The chain runs to 122 residues: Large ribosomal subunit protein uL14 (122 aa).

This sequence belongs to the universal ribosomal protein uL14 family. In terms of assembly, part of the 50S ribosomal subunit. Forms a cluster with proteins L3 and L19. In the 70S ribosome, L14 and L19 interact and together make contacts with the 16S rRNA in bridges B5 and B8.

Binds to 23S rRNA. Forms part of two intersubunit bridges in the 70S ribosome. The sequence is that of Large ribosomal subunit protein uL14 from Rickettsia bellii (strain OSU 85-389).